A 361-amino-acid polypeptide reads, in one-letter code: Blue-sensitive opsin (361 aa).

The Extracellular portion of the chain corresponds to 1–43 (MHPPRPTTDLPEDFYIPMALDAPNITALSPFLVPQTHLGSPGL). A glycan (N-linked (GlcNAc...) asparagine) is linked at asparagine 24. A helical transmembrane segment spans residues 44–68 (FRAMAAFMFLLIALGVPINTLTIFC). The Cytoplasmic segment spans residues 69–80 (TARFRKLRSHLN). The chain crosses the membrane as a helical span at residues 81–106 (YILVNLALANLLVILVGSTTACYSFS). Topologically, residues 107–120 (QMYFALGPTACKIE) are extracellular. Cysteines 117 and 194 form a disulfide. A helical membrane pass occupies residues 121–140 (GFAATLGGMVSLWSLAVVAF). Over 141 to 159 (ERFLVICKPLGNFTFRGSH) the chain is Cytoplasmic. The helical transmembrane segment at 160–183 (AVLGCVATWVLGFVASAPPLFGWS) threads the bilayer. Residues 184–209 (RYIPEGLQCSCGPDWYTTDNKWHNES) lie on the Extracellular side of the membrane. The helical transmembrane segment at 210-237 (YVLFLFTFCFGVPLAIIVFSYGRLLITL) threads the bilayer. Residues 238–259 (RAVARQQEQSATTQKADREVTK) are Cytoplasmic-facing. Residues 260–283 (MVVVMVLGFLVCWAPYTAFALWVV) form a helical membrane-spanning segment. The Extracellular segment spans residues 284 to 291 (THRGRSFE). Residues 292–316 (VGLASIPSVFSKSSTVYNPVIYVLM) form a helical membrane-spanning segment. An N6-(retinylidene)lysine modification is found at lysine 303. The Cytoplasmic portion of the chain corresponds to 317–361 (NKQFRSCMLKLLFCGRSPFGDDEDVSGSSQATQVSSVSSSHVAPA). Positions 338 to 361 (DEDVSGSSQATQVSSVSSSHVAPA) are disordered. The segment covering 342 to 361 (SGSSQATQVSSVSSSHVAPA) has biased composition (low complexity).

This sequence belongs to the G-protein coupled receptor 1 family. Opsin subfamily. Phosphorylated on some or all of the serine and threonine residues present in the C-terminal region. The color pigments are found in the cone photoreceptor cells.

It is found in the membrane. Functionally, visual pigments are the light-absorbing molecules that mediate vision. They consist of an apoprotein, opsin, covalently linked to cis-retinal. The chain is Blue-sensitive opsin from Gallus gallus (Chicken).